The primary structure comprises 356 residues: Cytochrome c oxidase subunit 2 (356 aa).

The signal sequence occupies residues 1 to 23 (MNKGLCNWRLFSLFGMMALLLAG). Positions 24 to 259 (CGKPFLSTLQ…QNAKKPVVTD (236 aa)) are cytochrome c oxidase subunit II. The next 2 membrane-spanning stretches (helical) occupy residues 45–65 (LMLLSTSIMVLVIVVVAIIFV) and 93–113 (IIWTVIPIILLLILAVPTVLT). The Cu cation site is built by His-178, Cys-219, Cys-223, and His-227. In terms of domain architecture, Cytochrome c spans 260 to 356 (PVAKEGEAIF…TKYLMSLKVE (97 aa)). Cys-273, Cys-276, His-277, and Met-331 together coordinate heme c.

It belongs to the cytochrome c oxidase subunit 2 family. It depends on Cu cation as a cofactor. Heme c serves as cofactor.

The protein localises to the cell membrane. It catalyses the reaction 4 Fe(II)-[cytochrome c] + O2 + 8 H(+)(in) = 4 Fe(III)-[cytochrome c] + 2 H2O + 4 H(+)(out). Functionally, subunits I and II form the functional core of the enzyme complex. Electrons originating in cytochrome c are transferred via heme a and Cu(A) to the binuclear center formed by heme a3 and Cu(B). This chain is Cytochrome c oxidase subunit 2 (ctaC), found in Bacillus sp. (strain PS3).